A 257-amino-acid polypeptide reads, in one-letter code: Cyclin-C1-1 (257 aa).

It belongs to the cyclin family. Cyclin C subfamily.

This Oryza sativa subsp. japonica (Rice) protein is Cyclin-C1-1.